A 673-amino-acid chain; its full sequence is Paralemmin-3 (673 aa).

Coiled coils occupy residues 4-49 (SSLY…LRER) and 75-101 (GQAQARIRNLEDSLFTLQSQLQLLQSA). Disordered regions lie at residues 49–78 (RWLMDGAAAVPEPSEDPTSKDPQSPEGQAQ) and 99–213 (QSAS…GEAK). Residues 123–137 (LSQSIVEAGSVGQTD) show a composition bias toward polar residues. 2 positions are modified to phosphoserine: S124 and S143. Phosphothreonine is present on T151. Phosphoserine occurs at positions 155, 157, and 260. Disordered stretches follow at residues 295 to 343 (VPEV…SFIW) and 356 to 673 (LLVE…CAVM). T301 carries the phosphothreonine modification. S325 bears the Phosphoserine mark. Residues 327-338 (EGDGQGGSGGEE) are compositionally biased toward gly residues. Phosphoserine occurs at positions 375 and 420. 2 stretches are compositionally biased toward basic and acidic residues: residues 392-477 (EAEK…KRGA) and 487-532 (GVEK…EKTQ). A phosphoserine mark is found at S544 and S660. 2 S-palmitoyl cysteine lipidation sites follow: C667 and C669. The residue at position 670 (C670) is a Cysteine methyl ester. C670 carries the S-farnesyl cysteine lipid modification. Positions 671 to 673 (AVM) are cleaved as a propeptide — removed in mature form.

It belongs to the paralemmin family. As to quaternary structure, interacts with SIGIRR. In terms of processing, palmitoylated on Cys-667 and Cys-669 and prenylated on Cys-670; which is required for membrane association.

Its subcellular location is the cytoplasm. It localises to the cell membrane. ATP-binding protein, which may act as a adapter in the Toll-like receptor (TLR) signaling. In Homo sapiens (Human), this protein is Paralemmin-3 (PALM3).